We begin with the raw amino-acid sequence, 421 residues long: Serine--tRNA ligase (421 aa).

225–227 (TAE) contributes to the L-serine binding site. ATP is bound by residues 256 to 258 (RSE) and Val-272. Residue Glu-279 coordinates L-serine. 345 to 348 (ETHS) provides a ligand contact to ATP. Thr-380 contacts L-serine.

The protein belongs to the class-II aminoacyl-tRNA synthetase family. Type-1 seryl-tRNA synthetase subfamily. In terms of assembly, homodimer. A single tRNA molecule binds across the dimer.

It localises to the cytoplasm. The catalysed reaction is tRNA(Ser) + L-serine + ATP = L-seryl-tRNA(Ser) + AMP + diphosphate + H(+). It carries out the reaction tRNA(Sec) + L-serine + ATP = L-seryl-tRNA(Sec) + AMP + diphosphate + H(+). It participates in aminoacyl-tRNA biosynthesis; selenocysteinyl-tRNA(Sec) biosynthesis; L-seryl-tRNA(Sec) from L-serine and tRNA(Sec): step 1/1. Its function is as follows. Catalyzes the attachment of serine to tRNA(Ser). Is also probably able to aminoacylate tRNA(Sec) with serine, to form the misacylated tRNA L-seryl-tRNA(Sec), which will be further converted into selenocysteinyl-tRNA(Sec). This chain is Serine--tRNA ligase (serS), found in Thermus thermophilus (strain ATCC BAA-163 / DSM 7039 / HB27).